Here is a 233-residue protein sequence, read N- to C-terminus: Large ribosomal subunit protein uL1 (233 aa).

This sequence belongs to the universal ribosomal protein uL1 family. As to quaternary structure, part of the 50S ribosomal subunit.

Binds directly to 23S rRNA. The L1 stalk is quite mobile in the ribosome, and is involved in E site tRNA release. Its function is as follows. Protein L1 is also a translational repressor protein, it controls the translation of the L11 operon by binding to its mRNA. This chain is Large ribosomal subunit protein uL1, found in Vibrio vulnificus (strain CMCP6).